We begin with the raw amino-acid sequence, 623 residues long: Prothrombin (623 aa).

An N-terminal signal peptide occupies residues 1-24 (MAHVRGLQLPGCLALAALCTLVHS). A propeptide spanning residues 25–43 (QHVFLAPQQALSLLQRVRR) is cleaved from the precursor. A Gla domain is found at 44–90 (ANSVFLEEVRKGNLERECVEETCSYEEAFEALESSTATDVFWAKYTA). 10 positions are modified to 4-carboxyglutamate: Glu-50, Glu-51, Glu-58, Glu-60, Glu-63, Glu-64, Glu-69, Glu-70, Glu-73, and Glu-76. Cys-61 and Cys-66 are joined by a disulfide. 11 cysteine pairs are disulfide-bonded: Cys-91-Cys-104, Cys-109-Cys-187, Cys-130-Cys-170, Cys-158-Cys-182, Cys-214-Cys-292, Cys-235-Cys-275, Cys-263-Cys-287, Cys-337-Cys-483, Cys-392-Cys-408, Cys-537-Cys-551, and Cys-565-Cys-595. Kringle domains follow at residues 108–187 (NCAE…IPVC) and 213–292 (QCVP…LNYC). Asn-122 and Asn-144 each carry an N-linked (GlcNAc...) asparagine glycan. The Peptidase S1 domain maps to 365 to 619 (IVEGSDAEIG…LKKWIQKVID (255 aa)). The active-site Charge relay system is the His-407. Asn-417 carries an N-linked (GlcNAc...) asparagine glycan. Asp-463 functions as the Charge relay system in the catalytic mechanism. The segment at 552 to 574 (AGYKPDEGKRGDACEGDSGGPFV) is high affinity receptor-binding region which also known as the TP508 peptide. Ser-569 (charge relay system) is an active-site residue.

The protein belongs to the peptidase S1 family. Heterodimer (named alpha-thrombin) of a light and a heavy chain; disulfide-linked. Forms a heterodimer with SERPINA5. In plasma, interacts (via N-terminus) with alpha-1-microglobulin; this interaction does not prevent the activation of prothrombin to thrombin. In terms of processing, the gamma-carboxyglutamyl residues, which bind calcium ions, result from the carboxylation of glutamyl residues by a microsomal enzyme, the vitamin K-dependent carboxylase. The modified residues are necessary for the calcium-dependent interaction with a negatively charged phospholipid surface, which is essential for the conversion of prothrombin to thrombin. Post-translationally, in the penultimate step of the coagulation cascade, prothrombin is converted to thrombin by the prothrombinase complex composed of factor Xa (F10), cofactor Va (F5), and phospholipids. This activation requires factor Xa-catalyzed sequential cleavage at 2 sites, Arg-315 and Arg-364, along 2 possible pathways. In the first pathway, the first cleavage occurs at Arg-315, leading to the formation of the inactive intermediate prethrombin-2. This pathway preferentially occurs on platelets and in the absence of cofactor Va. In the second pathway, the first cleavage occurs at Arg-364, which separates protease domain into 2 chains that remain connected through a disulfide bond and generates the active intermediate meizothrombin. The presence of cofactor Va directs activation along the meizothrombin pathway and greatly accelerates the rate of cleavage at Arg-364, but has a smaller effect on the cleavage of meizothrombin at Arg-315. Meizothrombin accumulates as an intermediate when prothrombinase is assembled on the membrane of red blood cells.

The enzyme catalyses Selective cleavage of Arg-|-Gly bonds in fibrinogen to form fibrin and release fibrinopeptides A and B.. Its activity is regulated as follows. Activity is promoted in the presence of negatively charged surfaces, such as polyphosphate and dextran sulfate. Inhibited by SERPINA5. Functionally, thrombin, which cleaves bonds after Arg and Lys, converts fibrinogen to fibrin and activates factors V, VII, VIII, XIII, and, in complex with thrombomodulin, protein C. Functions in blood homeostasis, inflammation and wound healing. Activates coagulation factor XI (F11); activation is promoted by the contact with negatively charged surfaces. Triggers the production of pro-inflammatory cytokines, such as MCP-1/CCL2 and IL8/CXCL8, in endothelial cells. The protein is Prothrombin (F2) of Pongo abelii (Sumatran orangutan).